The sequence spans 245 residues: 2-C-methyl-D-erythritol 4-phosphate cytidylyltransferase (245 aa).

It belongs to the IspD/TarI cytidylyltransferase family. IspD subfamily.

The catalysed reaction is 2-C-methyl-D-erythritol 4-phosphate + CTP + H(+) = 4-CDP-2-C-methyl-D-erythritol + diphosphate. It functions in the pathway isoprenoid biosynthesis; isopentenyl diphosphate biosynthesis via DXP pathway; isopentenyl diphosphate from 1-deoxy-D-xylulose 5-phosphate: step 2/6. In terms of biological role, catalyzes the formation of 4-diphosphocytidyl-2-C-methyl-D-erythritol from CTP and 2-C-methyl-D-erythritol 4-phosphate (MEP). This chain is 2-C-methyl-D-erythritol 4-phosphate cytidylyltransferase, found in Chloroherpeton thalassium (strain ATCC 35110 / GB-78).